The chain runs to 277 residues: Probable endonuclease 4 (277 aa).

Zn(2+)-binding residues include His-67, His-107, Glu-142, Asp-176, His-179, His-211, Asp-224, His-226, and Glu-256.

This sequence belongs to the AP endonuclease 2 family. Zn(2+) serves as cofactor.

It catalyses the reaction Endonucleolytic cleavage to 5'-phosphooligonucleotide end-products.. Endonuclease IV plays a role in DNA repair. It cleaves phosphodiester bonds at apurinic or apyrimidinic (AP) sites, generating a 3'-hydroxyl group and a 5'-terminal sugar phosphate. The polypeptide is Probable endonuclease 4 (Clostridium botulinum (strain Alaska E43 / Type E3)).